The chain runs to 242 residues: Flavin prenyltransferase PAD1, mitochondrial (242 aa).

The transit peptide at 1–58 (MLLFPRRTNIAFFKTTGIFANFPLLGRTITTSPSFLTHKLSKEVTRASTSPPRPKRIV) directs the protein to the mitochondrion. Residues 63 to 65 (GAT), S89, 140 to 143 (SMKS), and R175 contribute to the FMN site. Residues Y205 and R221 each coordinate dimethylallyl phosphate.

It belongs to the UbiX/PAD1 family. Oligomer.

The protein resides in the mitochondrion. It carries out the reaction dimethylallyl phosphate + FMNH2 = prenylated FMNH2 + phosphate. In terms of biological role, flavin prenyltransferase that catalyzes the synthesis of the prenylated FMN cofactor (prenyl-FMN) for the ferulic acid decarboxylase FDC1/ubiD. The prenyltransferase is metal-independent and links a dimethylallyl moiety from dimethylallyl monophosphate (DMAP) to the flavin N5 and C6 atoms of FMN. Involved in the decarboxylation of phenylacrylic acids like ferulic acid, p-coumaric acid or cinnamic acid, producing the corresponding vinyl derivatives which play the role of aroma metabolites. Also involved in the degradation of the food preservative sorbic acid (2,4-hexadienoic acid) to a volatile hydrocarbon, 1,3-pentadiene. Not essential for ubiquinone synthesis. Can rescue Q biosynthesis in E.coli strains lacking UbiX. Has mRNA binding activity. The chain is Flavin prenyltransferase PAD1, mitochondrial from Saccharomyces cerevisiae (strain ATCC 204508 / S288c) (Baker's yeast).